We begin with the raw amino-acid sequence, 602 residues long: Elongation factor 4 (602 aa).

The region spanning 7–189 (KFIRNFSIIA…QLVVAIPPPV (183 aa)) is the tr-type G domain. Residues 19–24 (DHGKST) and 136–139 (NKID) each bind GTP.

Belongs to the TRAFAC class translation factor GTPase superfamily. Classic translation factor GTPase family. LepA subfamily.

It is found in the cell inner membrane. The enzyme catalyses GTP + H2O = GDP + phosphate + H(+). Required for accurate and efficient protein synthesis under certain stress conditions. May act as a fidelity factor of the translation reaction, by catalyzing a one-codon backward translocation of tRNAs on improperly translocated ribosomes. Back-translocation proceeds from a post-translocation (POST) complex to a pre-translocation (PRE) complex, thus giving elongation factor G a second chance to translocate the tRNAs correctly. Binds to ribosomes in a GTP-dependent manner. The protein is Elongation factor 4 of Coxiella burnetii (strain Dugway 5J108-111).